Here is a 914-residue protein sequence, read N- to C-terminus: NADH-quinone oxidoreductase subunit G (914 aa).

The region spanning 1-83 is the 2Fe-2S ferredoxin-type domain; that stretch reads MATIHVDGKE…GTFISIDDSE (83 aa). The [2Fe-2S] cluster site is built by cysteine 34, cysteine 45, cysteine 48, and cysteine 67. Residues 83 to 122 enclose the 4Fe-4S His(Cys)3-ligated-type domain; sequence EAKAFRESVVEWLMTNHPHDCPVCEEGGNCHLQDMTVMTG. 12 residues coordinate [4Fe-4S] cluster: histidine 99, cysteine 103, cysteine 106, cysteine 112, cysteine 151, cysteine 154, cysteine 157, cysteine 201, cysteine 228, cysteine 231, cysteine 235, and cysteine 263. In terms of domain architecture, 4Fe-4S Mo/W bis-MGD-type spans 221 to 277; that stretch reads MQFAPSICQQCSVGCNTSPGERYGELRRIENRYNGSVNHYFMCDRGRFGYGYVNLKD.

It belongs to the complex I 75 kDa subunit family. In terms of assembly, composed of 13 different subunits. Subunits NuoCD, E, F, and G constitute the peripheral sector of the complex. It depends on [2Fe-2S] cluster as a cofactor. [4Fe-4S] cluster is required as a cofactor.

It catalyses the reaction a quinone + NADH + 5 H(+)(in) = a quinol + NAD(+) + 4 H(+)(out). Its function is as follows. NDH-1 shuttles electrons from NADH, via FMN and iron-sulfur (Fe-S) centers, to quinones in the respiratory chain. The immediate electron acceptor for the enzyme in this species is believed to be ubiquinone. Couples the redox reaction to proton translocation (for every two electrons transferred, four hydrogen ions are translocated across the cytoplasmic membrane), and thus conserves the redox energy in a proton gradient. The sequence is that of NADH-quinone oxidoreductase subunit G (nuoG) from Yersinia pestis.